We begin with the raw amino-acid sequence, 556 residues long: Butanoate--CoA ligase AAE1 (556 aa).

The Microbody targeting signal signature appears at 554–556 (SKL).

This sequence belongs to the ATP-dependent AMP-binding enzyme family. Expressed in roots, leaves, stems, flowers and developing seeds.

It is found in the peroxisome. The enzyme catalyses butanoate + ATP + CoA = butanoyl-CoA + AMP + diphosphate. It catalyses the reaction hexanoate + ATP + CoA = hexanoyl-CoA + AMP + diphosphate. It carries out the reaction pentanoate + ATP + CoA = pentanoyl-CoA + AMP + diphosphate. The catalysed reaction is 4-methylpentanoate + ATP + CoA = 4-methylpentanoyl-CoA + AMP + diphosphate. Functionally, catalyzes the ligation of CoA on butanoate to produce butanoyl-CoA. Can also use hexanoate, pentanoate and 4-methylpentanoate as substrates with a lower efficiency. The chain is Butanoate--CoA ligase AAE1 from Arabidopsis thaliana (Mouse-ear cress).